A 35-amino-acid chain; its full sequence is DDCLGMFSSCDPNNDKCCPNRKCSRKDQWCKYQLW.

3 disulfide bridges follow: Cys3–Cys18, Cys10–Cys23, and Cys17–Cys30.

Belongs to the neurotoxin 10 (Hwtx-1) family. 59 (Tltx) subfamily. Expressed by the venom gland.

The protein localises to the secreted. Its function is as follows. Gating-modifier toxin that inhibits both sodium (Nav) and calcium (Cav3) channels by inducing hyperpolarizing shift in voltage-dependence of activation and steady state inactivation. Inhibits Nav1.1/SCN1A, Nav1.2/SCN2A, Nav1.3/SCN3A, Nav1.6/SCN6A, Nav1.7/SCN9A and Cav3.1/CACNA1G sodium and calcium channels at nanomolar concentrations (IC(50)=81-301 nM). Surprisingly, selectively slows fast inactivation of Nav1.3/SCN3A. Also shows moderate inhibition of Cav3.2/CACNA1H calcium channels (IC(50)=1233 nM). Ex vivo, nearly ablates neuronal mechanosensitivity in afferent fibers innervating the colon and the bladder. In vivo, in a mouse model of irritable bowel syndrome, intracolonic administration of the toxin reverses colonic mechanical hypersensitivity. This chain is Mu/omega-theraphotoxin-Tap1a, found in Theraphosa apophysis (Goliath pinkfoot tarantula).